We begin with the raw amino-acid sequence, 239 residues long: Small ribosomal subunit protein uS3 (239 aa).

In terms of domain architecture, KH type-2 spans 40–108; it reads RGLLEKELYS…VALNVQEVQN (69 aa). Residues 212–239 are disordered; sequence KPKARPELPKAEERPRRRRPAVRVKKEE. The segment covering 215–226 has biased composition (basic and acidic residues); the sequence is ARPELPKAEERP. A compositionally biased stretch (basic residues) spans 227 to 239; sequence RRRRPAVRVKKEE.

Belongs to the universal ribosomal protein uS3 family. In terms of assembly, part of the 30S ribosomal subunit. Forms a tight complex with proteins S10 and S14.

Binds the lower part of the 30S subunit head. Binds mRNA in the 70S ribosome, positioning it for translation. The protein is Small ribosomal subunit protein uS3 (rpsC) of Thermus thermophilus (strain ATCC BAA-163 / DSM 7039 / HB27).